A 379-amino-acid chain; its full sequence is Cytochrome bd-I ubiquinol oxidase subunit 2 (379 aa).

Position 1 is an N-formylmethionine (M1). Residues 1 to 8 lie on the Cytoplasmic side of the membrane; it reads MIDYEVLR. The helical transmembrane segment at 9-28 threads the bilayer; sequence FIWWLLVGVLLIGFAVTDGF. The Periplasmic segment spans residues 29 to 79; sequence DMGVGMLTRFLGRNDTERRIMINSIAPHWDGNQVWLITAGGALFAAWPMVY. A helical transmembrane segment spans residues 80-99; sequence AAAFSGFYVAMILVLASLFF. Residues 100 to 122 are Cytoplasmic-facing; that stretch reads RPVGFDYRSKIEETRWRNMWDWG. The chain crosses the membrane as a helical span at residues 123–142; sequence IFIGSFVPPLVIGVAFGNLL. Over 143–164 the chain is Periplasmic; that stretch reads QGVPFNVDEYLRLYYTGNFFQL. A helical transmembrane segment spans residues 165-184; that stretch reads LNPFGLLAGVVSVGMIITQG. The Cytoplasmic segment spans residues 185 to 205; the sequence is ATYLQMRTVGELHLRTRATAQ. Residues 206–225 form a helical membrane-spanning segment; it reads VAALVTLVCFALAGVWVMYG. The Periplasmic portion of the chain corresponds to 226-262; it reads IDGYVVKSTMDHYAASNPLNKEVVREAGAWLVNFNNT. A helical membrane pass occupies residues 263–282; the sequence is PILWAIPALGVVLPLLTILT. At 283-292 the chain is on the cytoplasmic side; it reads ARMDKAAWAF. The chain crosses the membrane as a helical span at residues 293-312; that stretch reads VFSSLTLACIILTAGIAMFP. The Periplasmic portion of the chain corresponds to 313-336; the sequence is FVMPSSTMMNASLTMWDATSSQLT. A helical membrane pass occupies residues 337-356; sequence LNVMTWVAVVLVPIILLYTA. Residues 357 to 379 are Cytoplasmic-facing; it reads WCYWKMFGRITKEDIERNTHSLY.

The protein belongs to the cytochrome ubiquinol oxidase subunit 2 family. In terms of assembly, heterodimer of subunits I and II. Heme b is required as a cofactor. Heme d cis-diol serves as cofactor.

It is found in the cell inner membrane. It catalyses the reaction 2 a ubiquinol + O2(in) + 4 H(+)(in) = 2 a ubiquinone + 2 H2O(in) + 4 H(+)(out). It participates in energy metabolism; oxidative phosphorylation. Functionally, a terminal oxidase that produces a proton motive force by the vectorial transfer of protons across the inner membrane. It is the component of the aerobic respiratory chain of E.coli that predominates when cells are grown at low aeration. Generates a proton motive force using protons and electrons from opposite sides of the membrane to generate H(2)O, transferring 1 proton/electron. This chain is Cytochrome bd-I ubiquinol oxidase subunit 2 (cydB), found in Escherichia coli O157:H7.